Consider the following 209-residue polypeptide: NADH-ubiquinone oxidoreductase subunit 9 (209 aa).

It belongs to the complex I 30 kDa subunit family. Complex I is composed of about 45 different subunits.

The protein localises to the mitochondrion inner membrane. The catalysed reaction is a ubiquinone + NADH + 5 H(+)(in) = a ubiquinol + NAD(+) + 4 H(+)(out). Its function is as follows. Core subunit of the mitochondrial membrane respiratory chain NADH dehydrogenase (Complex I) that is believed to belong to the minimal assembly required for catalysis. Complex I functions in the transfer of electrons from NADH to the respiratory chain. The immediate electron acceptor for the enzyme is believed to be ubiquinone. The sequence is that of NADH-ubiquinone oxidoreductase subunit 9 (nad9) from Dictyostelium discoideum (Social amoeba).